Consider the following 311-residue polypeptide: Ornithine carbamoyltransferase (311 aa).

Carbamoyl phosphate contacts are provided by residues Ser56 to Thr59, Gln83, Arg107, and His134 to Gln137. L-ornithine is bound by residues Asn166, Asp230, and Ser234–Met235. Residues Cys270–Leu271 and Lys298 each bind carbamoyl phosphate.

It belongs to the aspartate/ornithine carbamoyltransferase superfamily. OTCase family.

The protein resides in the cytoplasm. The enzyme catalyses carbamoyl phosphate + L-ornithine = L-citrulline + phosphate + H(+). Its pathway is amino-acid degradation; L-arginine degradation via ADI pathway; carbamoyl phosphate from L-arginine: step 2/2. Functionally, reversibly catalyzes the transfer of the carbamoyl group from carbamoyl phosphate (CP) to the N(epsilon) atom of ornithine (ORN) to produce L-citrulline. The chain is Ornithine carbamoyltransferase from Ignicoccus hospitalis (strain KIN4/I / DSM 18386 / JCM 14125).